The sequence spans 502 residues: Chromosomal replication initiator protein DnaA (502 aa).

The interval 1 to 112 (MADDLSLGFT…PSTDHIDDNS (112 aa)) is domain I, interacts with DnaA modulators. The tract at residues 113 to 161 (SSADVLLTDDCGTDTDENYGEPLTGEYQGLPTYFTERPHHTESTVTGGT) is domain II. Residues 162–378 (SLNRRYTFET…GALIRVTAFA (217 aa)) form a domain III, AAA+ region region. ATP-binding residues include Gly-206, Gly-208, Lys-209, and Thr-210. The segment at 379–502 (SLNKTAIDKA…TTRIRQRSKR (124 aa)) is domain IV, binds dsDNA.

The protein belongs to the DnaA family. Oligomerizes as a right-handed, spiral filament on DNA at oriC.

Its subcellular location is the cytoplasm. In terms of biological role, plays an essential role in the initiation and regulation of chromosomal replication. ATP-DnaA binds to the origin of replication (oriC) to initiate formation of the DNA replication initiation complex once per cell cycle. Binds the DnaA box (a 9 base pair repeat at the origin) and separates the double-stranded (ds)DNA. Forms a right-handed helical filament on oriC DNA; dsDNA binds to the exterior of the filament while single-stranded (ss)DNA is stabiized in the filament's interior. The ATP-DnaA-oriC complex binds and stabilizes one strand of the AT-rich DNA unwinding element (DUE), permitting loading of DNA polymerase. After initiation quickly degrades to an ADP-DnaA complex that is not apt for DNA replication. Binds acidic phospholipids. This chain is Chromosomal replication initiator protein DnaA, found in Mycobacterium leprae (strain TN).